The sequence spans 115 residues: T cell receptor beta variable 18 (115 aa).

The signal sequence occupies residues 1-21 (MDTRLLCCAVICLLGAGLSNA). The 94-residue stretch at 22–115 (GVMQNPRHLV…SAAYFCASSP (94 aa)) folds into the Ig-like domain. Cysteine 42 and cysteine 111 are joined by a disulfide.

Alpha-beta TR is a heterodimer composed of an alpha and beta chain; disulfide-linked. The alpha-beta TR is associated with the transmembrane signaling CD3 coreceptor proteins to form the TR-CD3 (TcR or TCR). The assembly of alpha-beta TR heterodimers with CD3 occurs in the endoplasmic reticulum where a single alpha-beta TR heterodimer associates with one CD3D-CD3E heterodimer, one CD3G-CD3E heterodimer and one CD247 homodimer forming a stable octameric structure. CD3D-CD3E and CD3G-CD3E heterodimers preferentially associate with TR alpha and TR beta chains, respectively. The association of the CD247 homodimer is the last step of TcR assembly in the endoplasmic reticulum and is required for transport to the cell surface.

The protein resides in the cell membrane. Functionally, v region of the variable domain of T cell receptor (TR) beta chain that participates in the antigen recognition. Alpha-beta T cell receptors are antigen specific receptors which are essential to the immune response and are present on the cell surface of T lymphocytes. Recognize peptide-major histocompatibility (MH) (pMH) complexes that are displayed by antigen presenting cells (APC), a prerequisite for efficient T cell adaptive immunity against pathogens. Binding of alpha-beta TR to pMH complex initiates TR-CD3 clustering on the cell surface and intracellular activation of LCK that phosphorylates the ITAM motifs of CD3G, CD3D, CD3E and CD247 enabling the recruitment of ZAP70. In turn ZAP70 phosphorylates LAT, which recruits numerous signaling molecules to form the LAT signalosome. The LAT signalosome propagates signal branching to three major signaling pathways, the calcium, the mitogen-activated protein kinase (MAPK) kinase and the nuclear factor NF-kappa-B (NF-kB) pathways, leading to the mobilization of transcription factors that are critical for gene expression and essential for T cell growth and differentiation. The T cell repertoire is generated in the thymus, by V-(D)-J rearrangement. This repertoire is then shaped by intrathymic selection events to generate a peripheral T cell pool of self-MH restricted, non-autoaggressive T cells. Post-thymic interaction of alpha-beta TR with the pMH complexes shapes TR structural and functional avidity. The chain is T cell receptor beta variable 18 from Homo sapiens (Human).